Consider the following 364-residue polypeptide: Aminomethyltransferase (364 aa).

The protein belongs to the GcvT family. The glycine cleavage system is composed of four proteins: P, T, L and H.

It catalyses the reaction N(6)-[(R)-S(8)-aminomethyldihydrolipoyl]-L-lysyl-[protein] + (6S)-5,6,7,8-tetrahydrofolate = N(6)-[(R)-dihydrolipoyl]-L-lysyl-[protein] + (6R)-5,10-methylene-5,6,7,8-tetrahydrofolate + NH4(+). The glycine cleavage system catalyzes the degradation of glycine. The protein is Aminomethyltransferase of Escherichia coli (strain 55989 / EAEC).